We begin with the raw amino-acid sequence, 452 residues long: Ribosomal protein uS12 methylthiotransferase RimO (452 aa).

One can recognise an MTTase N-terminal domain in the interval 5–116 (PTIAFSHLGC…IVDVLQRTES (112 aa)). Cys-14, Cys-50, Cys-79, Cys-154, Cys-158, and Cys-161 together coordinate [4Fe-4S] cluster. One can recognise a Radical SAM core domain in the interval 140 to 369 (TTTSAVAYLR…MATQQPIAER (230 aa)). Residues 372–438 (RAQIGRLVDV…IYDLHGEVAS (67 aa)) form the TRAM domain.

Belongs to the methylthiotransferase family. RimO subfamily. It depends on [4Fe-4S] cluster as a cofactor.

The protein localises to the cytoplasm. It catalyses the reaction L-aspartate(89)-[ribosomal protein uS12]-hydrogen + (sulfur carrier)-SH + AH2 + 2 S-adenosyl-L-methionine = 3-methylsulfanyl-L-aspartate(89)-[ribosomal protein uS12]-hydrogen + (sulfur carrier)-H + 5'-deoxyadenosine + L-methionine + A + S-adenosyl-L-homocysteine + 2 H(+). Functionally, catalyzes the methylthiolation of an aspartic acid residue of ribosomal protein uS12. The protein is Ribosomal protein uS12 methylthiotransferase RimO of Synechococcus elongatus (strain ATCC 33912 / PCC 7942 / FACHB-805) (Anacystis nidulans R2).